A 355-amino-acid polypeptide reads, in one-letter code: 3-dehydroquinate synthase (355 aa).

NAD(+) contacts are provided by residues 71 to 76 (EGEASK), 105 to 109 (GVVGD), 129 to 130 (TS), Lys-142, and Lys-151. Zn(2+) is bound by residues Glu-184, His-246, and His-263.

The protein belongs to the sugar phosphate cyclases superfamily. Dehydroquinate synthase family. Co(2+) serves as cofactor. Requires Zn(2+) as cofactor. It depends on NAD(+) as a cofactor.

The protein resides in the cytoplasm. It carries out the reaction 7-phospho-2-dehydro-3-deoxy-D-arabino-heptonate = 3-dehydroquinate + phosphate. Its pathway is metabolic intermediate biosynthesis; chorismate biosynthesis; chorismate from D-erythrose 4-phosphate and phosphoenolpyruvate: step 2/7. Its function is as follows. Catalyzes the conversion of 3-deoxy-D-arabino-heptulosonate 7-phosphate (DAHP) to dehydroquinate (DHQ). The sequence is that of 3-dehydroquinate synthase from Streptococcus thermophilus (strain CNRZ 1066).